The sequence spans 101 residues: Large ribosomal subunit protein bL27 (101 aa).

A disordered region spans residues 1-21 (MAHKKAGGSSRNGRDSRSKRL).

The protein belongs to the bacterial ribosomal protein bL27 family.

This Buchnera aphidicola subsp. Cinara cedri (strain Cc) protein is Large ribosomal subunit protein bL27.